Reading from the N-terminus, the 102-residue chain is MAKGQSLQDPFLNALRRERVPVSIYLVNGIKLQGQIESFDQFVILLKNTVSQMVYKHAISTVVPSRPVSHHSNNAGGGSNNYHHSNNAQPSSAASQDSEDAE.

Residues 9–68 enclose the Sm domain; the sequence is DPFLNALRRERVPVSIYLVNGIKLQGQIESFDQFVILLKNTVSQMVYKHAISTVVPSRPV. The disordered stretch occupies residues 63 to 102; sequence VPSRPVSHHSNNAGGGSNNYHHSNNAQPSSAASQDSEDAE. Low complexity predominate over residues 70-96; that stretch reads HHSNNAGGGSNNYHHSNNAQPSSAASQ.

The protein belongs to the Hfq family. In terms of assembly, homohexamer.

In terms of biological role, RNA chaperone that binds small regulatory RNA (sRNAs) and mRNAs to facilitate mRNA translational regulation in response to envelope stress, environmental stress and changes in metabolite concentrations. Also binds with high specificity to tRNAs. This is RNA-binding protein Hfq from Cronobacter sakazakii (strain ATCC BAA-894) (Enterobacter sakazakii).